The sequence spans 354 residues: Serum paraoxonase/arylesterase 2 (354 aa).

Cys-42 and Cys-352 are disulfide-bonded. Ca(2+) is bound by residues Glu-53 and Asp-54. His-114 acts as the Proton acceptor in catalysis. Ca(2+)-binding residues include Ile-116, Asn-167, Asp-168, and Asn-223. An N-linked (GlcNAc...) asparagine glycan is attached at Asn-254. Residues Asp-268 and Asn-269 each coordinate Ca(2+). N-linked (GlcNAc...) asparagine glycans are attached at residues Asn-269 and Asn-323.

It belongs to the paraoxonase family. In terms of assembly, homotrimer. It depends on Ca(2+) as a cofactor. Glycosylated. In terms of processing, the signal sequence is not cleaved.

The protein resides in the membrane. The enzyme catalyses a phenyl acetate + H2O = a phenol + acetate + H(+). It carries out the reaction an N-acyl-L-homoserine lactone + H2O = an N-acyl-L-homoserine + H(+). Functionally, capable of hydrolyzing lactones and a number of aromatic carboxylic acid esters. This is Serum paraoxonase/arylesterase 2 (Pon2) from Rattus norvegicus (Rat).